The following is a 595-amino-acid chain: Probable xyloglucan glycosyltransferase 9 (595 aa).

Transmembrane regions (helical) follow at residues 30–50 and 77–97; these read AFVV…INGW and ATYV…LFLI. Asp-177 is a catalytic residue. Substrate contacts are provided by Asp-236 and Asp-238. Asp-330 is a catalytic residue. Helical transmembrane passes span 408–428, 433–453, 545–564, and 570–590; these read LILP…TMFV, LPDW…ILPS, IYKK…ARSL, and IHFY…LDLI.

Belongs to the glycosyltransferase 2 family. Plant cellulose synthase-like C subfamily.

It localises to the golgi apparatus membrane. In terms of biological role, probable beta-1,4-glucan synthase rather involved in the synthesis of the xyloglucan backbone than cellulose. Seems to work simultaneously with xyloglucan 6-xylosyltransferase. Xyloglucan is a noncellulosic polysaccharides of plant cell wall and consists of a glucan backbone substituted by xylose, galactose and fucose. This is Probable xyloglucan glycosyltransferase 9 (CSLC9) from Oryza sativa subsp. japonica (Rice).